We begin with the raw amino-acid sequence, 226 residues long: Enolase-phosphatase E1 (226 aa).

Belongs to the HAD-like hydrolase superfamily. MasA/MtnC family. Monomer. It depends on Mg(2+) as a cofactor.

It carries out the reaction 5-methylsulfanyl-2,3-dioxopentyl phosphate + H2O = 1,2-dihydroxy-5-(methylsulfanyl)pent-1-en-3-one + phosphate. The protein operates within amino-acid biosynthesis; L-methionine biosynthesis via salvage pathway; L-methionine from S-methyl-5-thio-alpha-D-ribose 1-phosphate: step 3/6. It functions in the pathway amino-acid biosynthesis; L-methionine biosynthesis via salvage pathway; L-methionine from S-methyl-5-thio-alpha-D-ribose 1-phosphate: step 4/6. Functionally, bifunctional enzyme that catalyzes the enolization of 2,3-diketo-5-methylthiopentyl-1-phosphate (DK-MTP-1-P) into the intermediate 2-hydroxy-3-keto-5-methylthiopentenyl-1-phosphate (HK-MTPenyl-1-P), which is then dephosphorylated to form the acireductone 1,2-dihydroxy-3-keto-5-methylthiopentene (DHK-MTPene). In Shewanella frigidimarina (strain NCIMB 400), this protein is Enolase-phosphatase E1.